We begin with the raw amino-acid sequence, 330 residues long: ADP-L-glycero-D-manno-heptose-6-epimerase (330 aa).

Residues 11-12 (FI), 32-33 (DN), Lys39, Lys54, 75-79 (EGACS), and Asn92 each bind NADP(+). The active-site Proton acceptor is the Tyr139. Position 143 (Lys143) interacts with NADP(+). Asn168 contacts substrate. NADP(+) is bound by residues Val169 and Lys177. Lys177 acts as the Proton acceptor in catalysis. Residues Arg179, His186, 200 to 203 (FGEY), Arg213, and Tyr292 each bind substrate.

It belongs to the NAD(P)-dependent epimerase/dehydratase family. HldD subfamily. As to quaternary structure, homopentamer. It depends on NADP(+) as a cofactor.

The enzyme catalyses ADP-D-glycero-beta-D-manno-heptose = ADP-L-glycero-beta-D-manno-heptose. It functions in the pathway nucleotide-sugar biosynthesis; ADP-L-glycero-beta-D-manno-heptose biosynthesis; ADP-L-glycero-beta-D-manno-heptose from D-glycero-beta-D-manno-heptose 7-phosphate: step 4/4. In terms of biological role, catalyzes the interconversion between ADP-D-glycero-beta-D-manno-heptose and ADP-L-glycero-beta-D-manno-heptose via an epimerization at carbon 6 of the heptose. The polypeptide is ADP-L-glycero-D-manno-heptose-6-epimerase (Paraburkholderia phytofirmans (strain DSM 17436 / LMG 22146 / PsJN) (Burkholderia phytofirmans)).